The chain runs to 546 residues: Chaperonin GroEL 2 (546 aa).

ATP contacts are provided by residues 30–33 (TLGP), lysine 51, 87–91 (DGTTT), glycine 415, 479–481 (NAA), and aspartate 495. The segment at 526–546 (KEDAPMPGGMPGGMGGMGMDM) is disordered. Over residues 534–546 (GMPGGMGGMGMDM) the composition is skewed to gly residues.

This sequence belongs to the chaperonin (HSP60) family. In terms of assembly, forms a cylinder of 14 subunits composed of two heptameric rings stacked back-to-back. Interacts with the co-chaperonin GroES.

It localises to the cytoplasm. It carries out the reaction ATP + H2O + a folded polypeptide = ADP + phosphate + an unfolded polypeptide.. In terms of biological role, together with its co-chaperonin GroES, plays an essential role in assisting protein folding. The GroEL-GroES system forms a nano-cage that allows encapsulation of the non-native substrate proteins and provides a physical environment optimized to promote and accelerate protein folding. This chain is Chaperonin GroEL 2, found in Burkholderia lata (strain ATCC 17760 / DSM 23089 / LMG 22485 / NCIMB 9086 / R18194 / 383).